A 409-amino-acid polypeptide reads, in one-letter code: NADH-quinone oxidoreductase subunit D 1 (409 aa).

This sequence belongs to the complex I 49 kDa subunit family. NDH-1 is composed of 14 different subunits. Subunits NuoB, C, D, E, F, and G constitute the peripheral sector of the complex.

It is found in the cell inner membrane. It catalyses the reaction a quinone + NADH + 5 H(+)(in) = a quinol + NAD(+) + 4 H(+)(out). In terms of biological role, NDH-1 shuttles electrons from NADH, via FMN and iron-sulfur (Fe-S) centers, to quinones in the respiratory chain. The immediate electron acceptor for the enzyme in this species is believed to be ubiquinone. Couples the redox reaction to proton translocation (for every two electrons transferred, four hydrogen ions are translocated across the cytoplasmic membrane), and thus conserves the redox energy in a proton gradient. This is NADH-quinone oxidoreductase subunit D 1 from Solibacter usitatus (strain Ellin6076).